Here is a 60-residue protein sequence, read N- to C-terminus: Large ribosomal subunit protein bL32 (60 aa).

Disordered regions lie at residues 1 to 28 (MAVQQNKKSPSKRGMHRSHNALALPGIA) and 41 to 60 (HISPNGFYRGRQVLKPKSEA). Over residues 9–19 (SPSKRGMHRSH) the composition is skewed to basic residues.

It belongs to the bacterial ribosomal protein bL32 family.

The protein is Large ribosomal subunit protein bL32 of Verminephrobacter eiseniae (strain EF01-2).